A 640-amino-acid polypeptide reads, in one-letter code: Lysophospholipase (640 aa).

The first 25 residues, 1–25, serve as a signal peptide directing secretion; it reads MWFLNSVNLLFLVCSVALHLDAVNA. A PLA2c domain is found at 38–589; the sequence is DCDENINLVR…EKYCWNGTVD (552 aa). Residues Asn-84, Asn-126, Asn-163, Asn-173, Asn-218, Asn-280, Asn-310, Asn-317, Asn-348, Asn-391, Asn-492, Asn-516, Asn-544, Asn-568, and Asn-585 are each glycosylated (N-linked (GlcNAc...) asparagine). The segment covering 594–610 has biased composition (low complexity); that stretch reads ISSTTSSSASSTSTSDS. The interval 594-616 is disordered; that stretch reads ISSTTSSSASSTSTSDSGNKENS.

It belongs to the lysophospholipase family. In terms of processing, highly glycosylated.

The protein localises to the secreted. It carries out the reaction a 1-acyl-sn-glycero-3-phosphocholine + H2O = sn-glycerol 3-phosphocholine + a fatty acid + H(+). In terms of biological role, catalyzes the release of fatty acids from lysophospholipids. At acidic pH the enzyme hydrolyzes all phospholipid substrates without metal ion. On the other hand, at alkaline pH the enzyme shows substrate specificity for phosphatidylcholine and lysophosphatidylcholine and requires Ca(2+), Fe(3+), or Al(3+) for the activity. The sequence is that of Lysophospholipase (PLB) from Kluyveromyces lactis (strain ATCC 8585 / CBS 2359 / DSM 70799 / NBRC 1267 / NRRL Y-1140 / WM37) (Yeast).